The sequence spans 138 residues: Superoxide dismutase [Mn] (138 aa).

Ser1, His49, Asp133, and His137 together coordinate Mn(2+).

The protein belongs to the iron/manganese superoxide dismutase family. The cofactor is Mn(2+).

It carries out the reaction 2 superoxide + 2 H(+) = H2O2 + O2. Functionally, destroys superoxide anion radicals which are normally produced within the cells and which are toxic to biological systems. The protein is Superoxide dismutase [Mn] (sodA) of Mycobacterium marinum.